A 244-amino-acid polypeptide reads, in one-letter code: Probable transcriptional regulatory protein XF_1906 (244 aa).

This sequence belongs to the TACO1 family.

The protein resides in the cytoplasm. This Xylella fastidiosa (strain 9a5c) protein is Probable transcriptional regulatory protein XF_1906.